The following is a 211-amino-acid chain: Probable cytokinin riboside 5'-monophosphate phosphoribohydrolase LOGL3 (211 aa).

Residues Glu84, 102 to 103 (RK), 119 to 125 (GYGTLEE), and Thr131 contribute to the substrate site.

The protein belongs to the LOG family. Expressed in roots, leaves, stems, tiller buds, shoot apex, immature inflorescences and flowers.

The enzyme catalyses N(6)-(dimethylallyl)adenosine 5'-phosphate + H2O = N(6)-dimethylallyladenine + D-ribose 5-phosphate. It carries out the reaction 9-ribosyl-trans-zeatin 5'-phosphate + H2O = trans-zeatin + D-ribose 5-phosphate. Cytokinin-activating enzyme working in the direct activation pathway. Phosphoribohydrolase that converts inactive cytokinin nucleotides to the biologically active free-base forms. The polypeptide is Probable cytokinin riboside 5'-monophosphate phosphoribohydrolase LOGL3 (LOGL3) (Oryza sativa subsp. japonica (Rice)).